Reading from the N-terminus, the 366-residue chain is Beta-1,3-glucan-binding protein (366 aa).

The signal sequence occupies residues 1 to 17 (MKGFVASVVLLACGALA). The GH16 domain maps to 18-364 (ADIVEPEDCT…YVRVWKMEST (347 aa)). N-linked (GlcNAc...) asparagine glycosylation is present at Asn-66.

This sequence belongs to the glycosyl hydrolase 16 family. As to expression, constitutively expressed in hemocytes.

Its subcellular location is the secreted. Functionally, binds to beta-1,3-glucan. May play a role in recognition of microorganisms and in activation of the prophenoloxidase cascade. In Penaeus monodon (Giant tiger prawn), this protein is Beta-1,3-glucan-binding protein.